A 390-amino-acid chain; its full sequence is GTPase Obg (390 aa).

The region spanning 1-159 (MKFIDESLIR…RDLLLELMLL (159 aa)) is the Obg domain. The 174-residue stretch at 160–333 (ADVGMLGLPN…LCRDIMDFII (174 aa)) folds into the OBG-type G domain. GTP is bound by residues 166 to 173 (GLPNAGKS), 191 to 195 (FTTLV), 213 to 216 (DIPG), 283 to 286 (NKID), and 314 to 316 (SAA). Mg(2+)-binding residues include serine 173 and threonine 193. Residues 363–382 (EHQFDDDEDWDDDWSEEDDE) form a disordered region. Over residues 366 to 382 (FDDDEDWDDDWSEEDDE) the composition is skewed to acidic residues.

It belongs to the TRAFAC class OBG-HflX-like GTPase superfamily. OBG GTPase family. Monomer. The cofactor is Mg(2+).

Its subcellular location is the cytoplasm. In terms of biological role, an essential GTPase which binds GTP, GDP and possibly (p)ppGpp with moderate affinity, with high nucleotide exchange rates and a fairly low GTP hydrolysis rate. Plays a role in control of the cell cycle, stress response, ribosome biogenesis and in those bacteria that undergo differentiation, in morphogenesis control. The chain is GTPase Obg from Haemophilus influenzae (strain ATCC 51907 / DSM 11121 / KW20 / Rd).